We begin with the raw amino-acid sequence, 218 residues long: Ribose-5-phosphate isomerase A (218 aa).

Substrate-binding positions include 27-30 (TGST), 80-83 (DGAD), and 93-96 (KGGG). Glu-102 functions as the Proton acceptor in the catalytic mechanism. Lys-120 serves as a coordination point for substrate.

This sequence belongs to the ribose 5-phosphate isomerase family. As to quaternary structure, homodimer.

The enzyme catalyses aldehydo-D-ribose 5-phosphate = D-ribulose 5-phosphate. The protein operates within carbohydrate degradation; pentose phosphate pathway; D-ribose 5-phosphate from D-ribulose 5-phosphate (non-oxidative stage): step 1/1. In terms of biological role, catalyzes the reversible conversion of ribose-5-phosphate to ribulose 5-phosphate. The protein is Ribose-5-phosphate isomerase A of Picrophilus torridus (strain ATCC 700027 / DSM 9790 / JCM 10055 / NBRC 100828 / KAW 2/3).